Here is a 237-residue protein sequence, read N- to C-terminus: C-type lectin domain family 4 member A (237 aa).

Over 1-48 the chain is Cytoplasmic; that stretch reads MTSEITYAEVRFKNEFKSSGINTASSAASKERTAPHKSNTGFPKLLCA. The ITIM motif signature appears at 5–10; it reads ITYAEV. Residues 49 to 69 traverse the membrane as a helical; Signal-anchor for type II membrane protein segment; the sequence is SLLIFFLLLAISFFIAFVIFF. The Extracellular portion of the chain corresponds to 70 to 237; sequence QKYSQLLEKK…SVCEMMKIHL (168 aa). Cystine bridges form between Cys106–Cys117, Cys134–Cys230, and Cys203–Cys222. In terms of domain architecture, C-type lectin spans 113–231; the sequence is FSSNCYFIST…CLGPQRSVCE (119 aa). Residues Val143, Asn145, and Glu149 each contribute to the Ca(2+) site. Asn185 carries N-linked (GlcNAc...) asparagine glycosylation. Ca(2+) contacts are provided by Glu195, Ser197, and Glu201. Alpha-D-mannopyranose contacts are provided by residues 195-197 and Glu201; that span reads EPS. 207-209 contributes to the N-acetyl-D-glucosamine binding site; it reads NFR. Residues Asn218, Asp219, and Glu231 each coordinate Ca(2+).

In terms of assembly, may interact with PTPN6 via its ITIM motif. As to expression, expressed preferentially in hematopoietic tissues. Expressed in all circulating Ag-presenting cells such as dendritic cells, myeloid cells, monocytes, macrophages, B-cells and epidermal Langerhans cells (at protein level). Expressed in peripheral blood leukocytes, neutrophils, moderate quantities in spleen, lymph node, and bone marrow, and at very low levels in thymus.

It localises to the cell membrane. Its function is as follows. C-type lectin receptor that binds carbohydrates mannose and fucose but also weakly interacts with N-acetylglucosamine (GlcNAc) in a Ca(2+)-dependent manner. Involved in regulating immune reactivity. Once triggered by antigen, it is internalized by clathrin-dependent endocytosis and delivers its antigenic cargo into the antigen presentation pathway resulting in cross-priming of CD8(+) T cells. This cross-presentation and cross-priming are enhanced by TLR7 and TLR8 agonists with increased expansion of the CD8(+) T cells, high production of IFNG and TNF with reduced levels of IL4, IL5 and IL13. In plasmacytoid dendritic cells, inhibits TLR9-mediated IFNA and TNF production. May be involved via its ITIM motif (immunoreceptor tyrosine-based inhibitory motifs) in the inhibition of B-cell-receptor-mediated calcium mobilization and protein tyrosine phosphorylation. Functionally, (Microbial infection) Involved in the interaction between HIV-1 virus and dendritic cells. Enhances HIV-1 binding/entry and virus infection. Requires ITIM motif-associated signal transduction pathway involving phosphatases PTPN6 and PTPN11, SYK, Src kinases and MAP kinases. The protein is C-type lectin domain family 4 member A of Homo sapiens (Human).